A 392-amino-acid polypeptide reads, in one-letter code: Putative nickel insertion protein (392 aa).

This sequence belongs to the LarC family.

The chain is Putative nickel insertion protein from Methanothrix thermoacetophila (strain DSM 6194 / JCM 14653 / NBRC 101360 / PT) (Methanosaeta thermophila).